The following is a 413-amino-acid chain: Tubby-like F-box protein 6 (413 aa).

The F-box domain occupies Ser-67–Gly-122.

This sequence belongs to the TUB family. Ubiquitous, with higher levels in flowers.

This is Tubby-like F-box protein 6 from Arabidopsis thaliana (Mouse-ear cress).